Consider the following 264-residue polypeptide: H-2 class II histocompatibility antigen, E-Q beta chain (264 aa).

The N-terminal stretch at 1–26 is a signal peptide; that stretch reads MVWLPRVPCVAAVILLLTVLSPPVAL. Residues 27–121 form a beta-1 region; it reads VRDSRPWFLE…IFDNFLVRRR (95 aa). At 27 to 225 the chain is on the extracellular side; the sequence is VRDSRPWFLE…KAQSTSAQNK (199 aa). 2 cysteine pairs are disulfide-bonded: cysteine 38–cysteine 106 and cysteine 144–cysteine 200. A glycan (N-linked (GlcNAc...) asparagine) is linked at asparagine 46. The tract at residues 122 to 225 is beta-2; sequence VEPTVTVYPT…KAQSTSAQNK (104 aa). Residues 124–214 enclose the Ig-like C1-type domain; the sequence is PTVTVYPTKT…PSLTDPVTVE (91 aa). The helical transmembrane segment at 226 to 246 threads the bilayer; it reads MLSGVGGFVLGLLFLGAGLFI. Residues 247–264 lie on the Cytoplasmic side of the membrane; that stretch reads YFRNQKGQSGLQPTGLLS.

This sequence belongs to the MHC class II family.

The protein resides in the membrane. The polypeptide is H-2 class II histocompatibility antigen, E-Q beta chain (Mus musculus (Mouse)).